The chain runs to 240 residues: tRNA1(Val) (adenine(37)-N6)-methyltransferase (240 aa).

The protein belongs to the methyltransferase superfamily. tRNA (adenine-N(6)-)-methyltransferase family.

The protein localises to the cytoplasm. It carries out the reaction adenosine(37) in tRNA1(Val) + S-adenosyl-L-methionine = N(6)-methyladenosine(37) in tRNA1(Val) + S-adenosyl-L-homocysteine + H(+). Specifically methylates the adenine in position 37 of tRNA(1)(Val) (anticodon cmo5UAC). This is tRNA1(Val) (adenine(37)-N6)-methyltransferase from Vibrio cholerae serotype O1 (strain ATCC 39315 / El Tor Inaba N16961).